The following is a 373-amino-acid chain: Glutamate 5-kinase (373 aa).

ATP is bound at residue Lys-15. The substrate site is built by Ser-54, Asp-141, and Asn-153. Residues 173–174 and 215–221 contribute to the ATP site; these read SD and TGGMATK. Residues 280–358 form the PUA domain; it reads RGKLLVDEGA…SEIEVVLGYK (79 aa).

It belongs to the glutamate 5-kinase family.

It is found in the cytoplasm. It catalyses the reaction L-glutamate + ATP = L-glutamyl 5-phosphate + ADP. It participates in amino-acid biosynthesis; L-proline biosynthesis; L-glutamate 5-semialdehyde from L-glutamate: step 1/2. Catalyzes the transfer of a phosphate group to glutamate to form L-glutamate 5-phosphate. The sequence is that of Glutamate 5-kinase from Syntrophotalea carbinolica (strain DSM 2380 / NBRC 103641 / GraBd1) (Pelobacter carbinolicus).